Here is a 296-residue protein sequence, read N- to C-terminus: Acetyl-coenzyme A carboxylase carboxyl transferase subunit beta (296 aa).

Positions 25–294 (VWTKCTSCEQ…PFVEPELISE (270 aa)) constitute a CoA carboxyltransferase N-terminal domain. The Zn(2+) site is built by Cys29, Cys32, Cys48, and Cys51. The segment at 29–51 (CTSCEQVLYSEELKRNLYVCPKC) adopts a C4-type zinc-finger fold.

This sequence belongs to the AccD/PCCB family. As to quaternary structure, acetyl-CoA carboxylase is a heterohexamer composed of biotin carboxyl carrier protein (AccB), biotin carboxylase (AccC) and two subunits each of ACCase subunit alpha (AccA) and ACCase subunit beta (AccD). The cofactor is Zn(2+).

The protein localises to the cytoplasm. The enzyme catalyses N(6)-carboxybiotinyl-L-lysyl-[protein] + acetyl-CoA = N(6)-biotinyl-L-lysyl-[protein] + malonyl-CoA. It functions in the pathway lipid metabolism; malonyl-CoA biosynthesis; malonyl-CoA from acetyl-CoA: step 1/1. In terms of biological role, component of the acetyl coenzyme A carboxylase (ACC) complex. Biotin carboxylase (BC) catalyzes the carboxylation of biotin on its carrier protein (BCCP) and then the CO(2) group is transferred by the transcarboxylase to acetyl-CoA to form malonyl-CoA. This chain is Acetyl-coenzyme A carboxylase carboxyl transferase subunit beta, found in Haemophilus influenzae (strain PittEE).